Reading from the N-terminus, the 83-residue chain is Normal mucosa of esophagus-specific gene 1 protein (83 aa).

This sequence belongs to the complex I NDUFA4 subunit family.

It is found in the nucleus. The protein is Normal mucosa of esophagus-specific gene 1 protein (Nmes1) of Rattus norvegicus (Rat).